Here is a 193-residue protein sequence, read N- to C-terminus: Large ribosomal subunit protein uL5 (193 aa).

It belongs to the universal ribosomal protein uL5 family. In terms of assembly, part of the 50S ribosomal subunit; part of the 5S rRNA/L5/L18/L25 subcomplex. Contacts the 5S rRNA and the P site tRNA. Forms a bridge to the 30S subunit in the 70S ribosome.

Functionally, this is one of the proteins that bind and probably mediate the attachment of the 5S RNA into the large ribosomal subunit, where it forms part of the central protuberance. In the 70S ribosome it contacts protein S13 of the 30S subunit (bridge B1b), connecting the 2 subunits; this bridge is implicated in subunit movement. Contacts the P site tRNA; the 5S rRNA and some of its associated proteins might help stabilize positioning of ribosome-bound tRNAs. This is Large ribosomal subunit protein uL5 from Novosphingobium aromaticivorans (strain ATCC 700278 / DSM 12444 / CCUG 56034 / CIP 105152 / NBRC 16084 / F199).